Here is a 426-residue protein sequence, read N- to C-terminus: DNA polymerase processivity factor component A20 (426 aa).

It belongs to the poxviruses A20 family. In terms of assembly, interacts with the DNA polymerase catalytic subunit E9. Interacts with UDG. Component of the Uracil-DNA glycosylase(UDG)-A20-polymerase complex; A20 and UDG form a heterodimeric processivity factor that associates with E9 to form the processive polymerase holoenzyme. Interacts with D5.

Its function is as follows. Plays an essential role in viral DNA replication by acting as the polymerase processivity factor together with protein D4. May serve as a bridge which links the DNA polymerase E9 and the uracil DNA glycosylase. The sequence is that of DNA polymerase processivity factor component A20 from Vaccinia virus (strain Ankara) (VACV).